A 130-amino-acid polypeptide reads, in one-letter code: Small ribosomal subunit protein uS11c (130 aa).

The protein belongs to the universal ribosomal protein uS11 family. As to quaternary structure, part of the 30S ribosomal subunit.

It localises to the plastid. Its subcellular location is the chloroplast. In Chlorokybus atmophyticus (Soil alga), this protein is Small ribosomal subunit protein uS11c.